Here is a 430-residue protein sequence, read N- to C-terminus: Enolase (430 aa).

Gln-163 contacts (2R)-2-phosphoglycerate. Residue Glu-205 is the Proton donor of the active site. Mg(2+)-binding residues include Asp-242, Glu-287, and Asp-314. Residues Lys-339, Arg-368, Ser-369, and Lys-390 each coordinate (2R)-2-phosphoglycerate. The Proton acceptor role is filled by Lys-339.

The protein belongs to the enolase family. Mg(2+) serves as cofactor.

It localises to the cytoplasm. The protein localises to the secreted. Its subcellular location is the cell surface. It catalyses the reaction (2R)-2-phosphoglycerate = phosphoenolpyruvate + H2O. Its pathway is carbohydrate degradation; glycolysis; pyruvate from D-glyceraldehyde 3-phosphate: step 4/5. Its function is as follows. Catalyzes the reversible conversion of 2-phosphoglycerate (2-PG) into phosphoenolpyruvate (PEP). It is essential for the degradation of carbohydrates via glycolysis. The sequence is that of Enolase from Alkaliphilus metalliredigens (strain QYMF).